We begin with the raw amino-acid sequence, 437 residues long: RNA-binding motif, single-stranded-interacting protein 3 (437 aa).

The disordered stretch occupies residues 28-57 (YAPAPHPMAPPSPSTNSSSNNSSNNSSGEQ). A compositionally biased stretch (pro residues) spans 31–40 (APHPMAPPSP). The segment covering 41-54 (STNSSSNNSSNNSS) has biased composition (low complexity). 2 RRM domains span residues 61 to 134 (TNLY…MAKQ) and 140 to 225 (TNLY…FADG). Over residues 399-422 (TSPQTVAPSSQDTSGQQQQIAVDT) the composition is skewed to polar residues. A disordered region spans residues 399 to 437 (TSPQTVAPSSQDTSGQQQQIAVDTSNEHAPAYSYQQSKP).

As to expression, expressed in fetal brain, fetal lung, fetal liver, heart, brain, placenta, lung, liver, muscle, kidney and pancreas.

The protein resides in the cytoplasm. Functionally, binds poly(A) and poly(U) oligoribonucleotides. The protein is RNA-binding motif, single-stranded-interacting protein 3 (RBMS3) of Homo sapiens (Human).